The chain runs to 383 residues: Schlafen-like protein 3 (383 aa).

Residues 118–266 (FDYQSNFSDV…SDKVYQISSG (149 aa)) are SLFN-like fold. A helical transmembrane segment spans residues 354 to 374 (LLDIQNIGWIFFGTALSFCIY).

The protein belongs to the Schlafen family. As to quaternary structure, component of the PUCH (precursor of 21U RNA 5'-end cleavage holoenzyme) complex; consisting of tofu-1, tofu-2 and either slfl-3 or slfl-4. Within the complex, interacts (via N-terminus) with tofu-2 (via N-terminus); the presence of tofu-1 is required for the interaction.

It is found in the mitochondrion membrane. Functionally, component of the trimeric PUCH (precursor of 21U RNA 5'-end cleavage holoenzyme) complex, that acts as an endoribonuclease processing the 5'-end of precursor Piwi-interacting RNAs (piRNAs). The PUCH complex consists of tofu-1, tofu-2 and either slfl-3 or slfl-4, where tofu-2 exhibits endoribonuclease activity. PUCH-mediated processing strictly requires a 7-methyl-G cap (m7 G-cap) and an uracil at position three (U3). PUCH also exhibits a strict bias for piRNA precursors with an A or G at position 1. Mature piRNA production is enhanced by the interaction of PUCH with the PETISCO complex, which is stabilizing piRNA precursors and allows their processing by PUCH. This chain is Schlafen-like protein 3, found in Caenorhabditis elegans.